A 357-amino-acid chain; its full sequence is Homoserine O-succinyltransferase (357 aa).

Cys146 serves as the catalytic Acyl-thioester intermediate. Substrate contacts are provided by Lys167 and Ser196. Residue His239 is the Proton acceptor of the active site. The active site involves Glu241. Arg253 is a binding site for substrate.

The protein belongs to the MetA family.

It localises to the cytoplasm. It catalyses the reaction L-homoserine + succinyl-CoA = O-succinyl-L-homoserine + CoA. It functions in the pathway amino-acid biosynthesis; L-methionine biosynthesis via de novo pathway; O-succinyl-L-homoserine from L-homoserine: step 1/1. In terms of biological role, transfers a succinyl group from succinyl-CoA to L-homoserine, forming succinyl-L-homoserine. In Allochromatium vinosum (strain ATCC 17899 / DSM 180 / NBRC 103801 / NCIMB 10441 / D) (Chromatium vinosum), this protein is Homoserine O-succinyltransferase.